We begin with the raw amino-acid sequence, 609 residues long: Vanadium chloroperoxidase (609 aa).

Residues K353, R360, S402, G403, H404, R490, and H496 each contribute to the vanadate site. The active-site Proton donor is H404. The interval 569 to 609 (KPTPPEIQPMPQETPVQKPVGQQPVKGMWEEEQAPVVKEAP) is disordered.

Belongs to the vanadium-dependent haloperoxidase family. In terms of assembly, homotetramer. Requires vanadate as cofactor. The N-terminus is blocked.

Its subcellular location is the secreted. It catalyses the reaction RH + Cl(-) + H2O2 = RCl + 2 H2O.. Functionally, catalyzes the oxidation of chloride in the presence of hydrogen peroxide to hypochlorous acid (ClOH), which in turn can react with a nucleophilic acceptor (RH), to form a chlorinated compound. The protein is Vanadium chloroperoxidase (CPO) of Curvularia inaequalis (Helminthosporium inaequale).